The chain runs to 267 residues: Thiamine thiazole synthase (267 aa).

Residues S41, 60-61 (ER), G68, V132, and 160-162 (HVD) contribute to the NAD(+) site. Fe cation is bound by residues D162 and H177. An NAD(+)-binding site is contributed by M227. Residue R237 participates in glycine binding.

It belongs to the THI4 family. Homooctamer; tetramer of dimers. Fe(2+) serves as cofactor.

The enzyme catalyses hydrogen sulfide + glycine + NAD(+) = ADP-5-ethyl-4-methylthiazole-2-carboxylate + nicotinamide + 3 H2O + H(+). Its pathway is cofactor biosynthesis; thiamine diphosphate biosynthesis. In terms of biological role, involved in the biosynthesis of the thiazole moiety of thiamine. Catalyzes the conversion of NAD and glycine to adenosine diphosphate 5-(2-hydroxyethyl)-4-methylthiazole-2-carboxylate (ADT), an adenylated thiazole intermediate, using free sulfide as a source of sulfur. This is Thiamine thiazole synthase from Saccharolobus islandicus (strain M.14.25 / Kamchatka #1) (Sulfolobus islandicus).